The primary structure comprises 150 residues: UPF0260 protein CGSHiGG_00425 (150 aa).

This sequence belongs to the UPF0260 family.

The sequence is that of UPF0260 protein CGSHiGG_00425 from Haemophilus influenzae (strain PittGG).